The chain runs to 238 residues: 3-dehydroquinate dehydratase (238 aa).

3-dehydroquinate-binding positions include 35–37 and Arg-68; that span reads ELR. The active-site Proton donor/acceptor is His-131. Lys-158 functions as the Schiff-base intermediate with substrate in the catalytic mechanism. 3-dehydroquinate is bound by residues Arg-200 and Gln-223.

It belongs to the type-I 3-dehydroquinase family. As to quaternary structure, homodimer.

The catalysed reaction is 3-dehydroquinate = 3-dehydroshikimate + H2O. It functions in the pathway metabolic intermediate biosynthesis; chorismate biosynthesis; chorismate from D-erythrose 4-phosphate and phosphoenolpyruvate: step 3/7. Involved in the third step of the chorismate pathway, which leads to the biosynthesis of aromatic amino acids. Catalyzes the cis-dehydration of 3-dehydroquinate (DHQ) and introduces the first double bond of the aromatic ring to yield 3-dehydroshikimate. This is 3-dehydroquinate dehydratase from Staphylococcus epidermidis (strain ATCC 35984 / DSM 28319 / BCRC 17069 / CCUG 31568 / BM 3577 / RP62A).